The chain runs to 444 residues: Deoxyguanosinetriphosphate triphosphohydrolase-like protein (444 aa).

A disordered region spans residues 1–26 (MTESLWHERRLTEEKKRRNDHRSPYQ). One can recognise an HD domain in the interval 59-250 (RLTHSLEVSQ…MELADDIAYA (192 aa)).

This sequence belongs to the dGTPase family. Type 2 subfamily.

This Shewanella sediminis (strain HAW-EB3) protein is Deoxyguanosinetriphosphate triphosphohydrolase-like protein.